The sequence spans 540 residues: Sensory neuron membrane protein 1 (540 aa).

Residues 1-105 (MRTDDPVIGN…WIFRPDLSKP (105 aa)) are Cytoplasmic-facing. A helical membrane pass occupies residues 106–126 (LTGDEMITIPHPLILGALLMV). Residues 127-436 (QRDREAMMPL…YTLFLGLRFN (310 aa)) are Extracellular-facing. N-linked (GlcNAc...) asparagine glycosylation is found at Asn-193 and Asn-206. 3 disulfide bridges follow: Cys-245-Cys-310, Cys-274-Cys-330, and Cys-312-Cys-319. The N-linked (GlcNAc...) asparagine glycan is linked to Asn-418. Residues 437–457 (TAVKWLTIIIGTIGTIVGGFM) traverse the membrane as a helical segment. Topologically, residues 458–540 (HYKRTTKMVN…VTVTEMQERY (83 aa)) are cytoplasmic.

The protein belongs to the CD36 family.

It localises to the cell membrane. Its function is as follows. Plays an olfactory role that is not restricted to pheromone sensitivity. This Aedes aegypti (Yellowfever mosquito) protein is Sensory neuron membrane protein 1.